Here is a 268-residue protein sequence, read N- to C-terminus: Leucyl/phenylalanyl-tRNA--protein transferase (268 aa).

The protein belongs to the L/F-transferase family.

It localises to the cytoplasm. It carries out the reaction N-terminal L-lysyl-[protein] + L-leucyl-tRNA(Leu) = N-terminal L-leucyl-L-lysyl-[protein] + tRNA(Leu) + H(+). The enzyme catalyses N-terminal L-arginyl-[protein] + L-leucyl-tRNA(Leu) = N-terminal L-leucyl-L-arginyl-[protein] + tRNA(Leu) + H(+). The catalysed reaction is L-phenylalanyl-tRNA(Phe) + an N-terminal L-alpha-aminoacyl-[protein] = an N-terminal L-phenylalanyl-L-alpha-aminoacyl-[protein] + tRNA(Phe). Functions in the N-end rule pathway of protein degradation where it conjugates Leu, Phe and, less efficiently, Met from aminoacyl-tRNAs to the N-termini of proteins containing an N-terminal arginine or lysine. The chain is Leucyl/phenylalanyl-tRNA--protein transferase from Zymomonas mobilis subsp. mobilis (strain ATCC 31821 / ZM4 / CP4).